Here is a 225-residue protein sequence, read N- to C-terminus: uncharacterized protein (225 aa).

This is an uncharacterized protein from Amsacta moorei entomopoxvirus (AmEPV).